Consider the following 493-residue polypeptide: Trichothecene 8-O-acetyltransferase (493 aa).

The segment covering 180–191 has biased composition (polar residues); that stretch reads QDQNENEVQQPK. The interval 180-199 is disordered; that stretch reads QDQNENEVQQPKNLPDPDEP.

It participates in sesquiterpene biosynthesis; trichothecene biosynthesis. In terms of biological role, trichothecene 8-O-acetyltransferase; part of 2-gene cluster involved in trichothecene C-8 modification that mediates the biosynthesis of T2-toxin. The biosynthesis of trichothecenes begins with the cyclization of farnesyl diphosphate to trichodiene and is catalyzed by the trichodiene synthase TRI5. Trichodiene undergoes a series of oxygenations catalyzed by the cytochrome P450 monooxygenase TRI4. TRI4 controls the addition of four oxygens at C-2, C-3, C-11, and the C-12, C-13-epoxide to form the intermediate isotrichotriol. Isotrichotriol then undergoes a non-enzymatic isomerization and cyclization to form isotrichodermol. During this process, the oxygen at the C-2 position becomes the pyran ring oxygen and the hydroxyl group at C-11 is lost. More complex type A trichothecenes are built by modifying isotrichodermol through a series of paired hydroxylation and acetylation or acylation steps. Isotrichodermol is converted to isotrichodermin by the acetyltransferase TRI101. TRI101 encodes a C-3 transacetylase that acts as a self-protection or resistance factor during biosynthesis and that the presence of a free C-3 hydroxyl group is a key component of Fusarium trichothecene phytotoxicity. A second hydroxyl group is added to C-15 by the trichothecene C-15 hydroxylase TRI11, producing 15-decalonectrin, which is then acetylated by TRI3, producing calonectrin. A third hydroxyl group is added at C-4 by the cytochrome P450 monooxygenase TRI13, converting calonectrin to 3,15-diacetoxyspirpenol, which is subsequently acetylated bythe acetyltransferase TRI7. A fourth hydroxyl group is added to C-8 by the cytochrome P450 monooxygenase TRI1, followed by the addition of an isovaleryl moiety by TRI16. Finally, the acetyl group is removed from the C-3 position by the trichothecene C-3 esterase TRI8 to produce T-2 toxin. This Fusarium sporotrichioides protein is Trichothecene 8-O-acetyltransferase.